We begin with the raw amino-acid sequence, 123 residues long: Heat-labile enterotoxin IIA, B chain (123 aa).

A signal peptide spans 1–19 (MSSKKIIGAFVLMTGILSG). C33 and C104 are disulfide-bonded.

As to quaternary structure, heterohexamer of one A chain and of five B chains.

In terms of biological role, the biological activity of the toxin is produced by the A chain, which activates intracellular adenyl cyclase. This Escherichia coli protein is Heat-labile enterotoxin IIA, B chain.